The chain runs to 1221 residues: DNA-directed RNA polymerase subunit beta' (1221 aa).

Residues cysteine 60, cysteine 62, cysteine 75, and cysteine 78 each coordinate Zn(2+). Mg(2+)-binding residues include aspartate 449, aspartate 451, and aspartate 453. Residues cysteine 821, cysteine 896, cysteine 903, and cysteine 906 each coordinate Zn(2+).

It belongs to the RNA polymerase beta' chain family. As to quaternary structure, the RNAP catalytic core consists of 2 alpha, 1 beta, 1 beta' and 1 omega subunit. When a sigma factor is associated with the core the holoenzyme is formed, which can initiate transcription. The cofactor is Mg(2+). Zn(2+) serves as cofactor.

It catalyses the reaction RNA(n) + a ribonucleoside 5'-triphosphate = RNA(n+1) + diphosphate. Its function is as follows. DNA-dependent RNA polymerase catalyzes the transcription of DNA into RNA using the four ribonucleoside triphosphates as substrates. The polypeptide is DNA-directed RNA polymerase subunit beta' (Lactobacillus delbrueckii subsp. bulgaricus (strain ATCC BAA-365 / Lb-18)).